The chain runs to 222 residues: Deoxyribose-phosphate aldolase (222 aa).

Aspartate 89 (proton donor/acceptor) is an active-site residue. The Schiff-base intermediate with acetaldehyde role is filled by lysine 151. Lysine 180 acts as the Proton donor/acceptor in catalysis.

This sequence belongs to the DeoC/FbaB aldolase family. DeoC type 1 subfamily.

Its subcellular location is the cytoplasm. The catalysed reaction is 2-deoxy-D-ribose 5-phosphate = D-glyceraldehyde 3-phosphate + acetaldehyde. Its pathway is carbohydrate degradation; 2-deoxy-D-ribose 1-phosphate degradation; D-glyceraldehyde 3-phosphate and acetaldehyde from 2-deoxy-alpha-D-ribose 1-phosphate: step 2/2. Functionally, catalyzes a reversible aldol reaction between acetaldehyde and D-glyceraldehyde 3-phosphate to generate 2-deoxy-D-ribose 5-phosphate. The protein is Deoxyribose-phosphate aldolase of Acholeplasma laidlawii (strain PG-8A).